The primary structure comprises 271 residues: Phosphatidylglycerol--prolipoprotein diacylglyceryl transferase (271 aa).

7 consecutive transmembrane segments (helical) span residues 10–30 (VALA…LVGI), 56–76 (LVFW…VLFY), 92–112 (WKGG…ALWF), 120–140 (FFQL…AGRI), 174–194 (PSQL…LWLF), 202–222 (MAVS…VEFV), and 237–257 (LTMG…LIWL). Arginine 139 contributes to the a 1,2-diacyl-sn-glycero-3-phospho-(1'-sn-glycerol) binding site.

It belongs to the Lgt family.

The protein resides in the cell inner membrane. It catalyses the reaction L-cysteinyl-[prolipoprotein] + a 1,2-diacyl-sn-glycero-3-phospho-(1'-sn-glycerol) = an S-1,2-diacyl-sn-glyceryl-L-cysteinyl-[prolipoprotein] + sn-glycerol 1-phosphate + H(+). It functions in the pathway protein modification; lipoprotein biosynthesis (diacylglyceryl transfer). Catalyzes the transfer of the diacylglyceryl group from phosphatidylglycerol to the sulfhydryl group of the N-terminal cysteine of a prolipoprotein, the first step in the formation of mature lipoproteins. This chain is Phosphatidylglycerol--prolipoprotein diacylglyceryl transferase, found in Pseudomonas fluorescens (strain Pf0-1).